The following is a 320-amino-acid chain: Aspartate carbamoyltransferase catalytic subunit (320 aa).

Carbamoyl phosphate is bound by residues R65 and T66. K93 is a binding site for L-aspartate. R115, H143, and Q146 together coordinate carbamoyl phosphate. 2 residues coordinate L-aspartate: R176 and R230. Positions 271 and 272 each coordinate carbamoyl phosphate.

It belongs to the aspartate/ornithine carbamoyltransferase superfamily. ATCase family. In terms of assembly, heterododecamer (2C3:3R2) of six catalytic PyrB chains organized as two trimers (C3), and six regulatory PyrI chains organized as three dimers (R2).

The enzyme catalyses carbamoyl phosphate + L-aspartate = N-carbamoyl-L-aspartate + phosphate + H(+). It participates in pyrimidine metabolism; UMP biosynthesis via de novo pathway; (S)-dihydroorotate from bicarbonate: step 2/3. Its function is as follows. Catalyzes the condensation of carbamoyl phosphate and aspartate to form carbamoyl aspartate and inorganic phosphate, the committed step in the de novo pyrimidine nucleotide biosynthesis pathway. The chain is Aspartate carbamoyltransferase catalytic subunit from Maricaulis maris (strain MCS10) (Caulobacter maris).